Reading from the N-terminus, the 487-residue chain is Serine/threonine-protein kinase 4 (487 aa).

An N-acetylmethionine modification is found at methionine 1. Threonine 3 is modified (phosphothreonine). Residues 30-281 enclose the Protein kinase domain; it reads FDVLEKLGEG…ATQLLQHPFV (252 aa). Residues 36–44 and lysine 59 each bind ATP; that span reads LGEGSYGSV. The active-site Proton acceptor is aspartate 149. The residue at position 183 (threonine 183) is a Phosphothreonine; by autocatalysis. Serine 265 is subject to Phosphoserine. The stretch at 290-310 forms a coiled coil; that stretch reads LRDLINEAMDVKLKRQESQQR. Positions 303–312 are enriched in basic and acidic residues; that stretch reads KRQESQQREV. Residues 303–332 form a disordered region; the sequence is KRQESQQREVDQDDEENSEEDEMDSGTMVR. The segment covering 313–326 has biased composition (acidic residues); sequence DQDDEENSEEDEMD. Phosphoserine is present on serine 320. A phosphothreonine mark is found at threonine 340 and threonine 367. The residue at position 387 (threonine 387) is a Phosphothreonine; by PKB/AKT1. Residues serine 410 and serine 414 each carry the phosphoserine modification. The residue at position 433 (tyrosine 433) is a Phosphotyrosine. The region spanning 433-480 is the SARAH domain; the sequence is YEFLKSWTVEDLQKRLLALDPMMEQEIEEIRQKYQSKRQPILDAIEAK.

The protein belongs to the protein kinase superfamily. STE Ser/Thr protein kinase family. STE20 subfamily. In terms of assembly, homodimer; mediated via the coiled-coil region. Interacts with NORE1, which inhibits autoactivation. Interacts with and stabilizes SAV1. Interacts with RASSF1. Interacts with FOXO3. Interacts with RASSF2 (via SARAH domain). Interacts with AR, PKB/AKT1, TNNI3 and SIRT1. Interacts with DLG5 (via PDZ domain 3). Interacts with MARK3 and SCRIB in the presence of DLG5. Mg(2+) is required as a cofactor. In terms of processing, autophosphorylated on serine and threonine residues. Phosphorylation at Thr-387 by PKB/AKT1, leads to inhibition of its: kinase activity, nuclear translocation and autophosphorylation at Thr-183. It also diminishes its cleavage by caspases and its ability to phosphorylate FOXO3. Proteolytically cleaved by caspase-3 during apoptosis at Asp-326 and Asp-349 resulting in a 37 kDa or a 39 kDa subunit respectively. The 39 kDa subunit is further cleaved into the 37 kDa form. Proteolytic cleavage results in kinase activation and nuclear translocation of the truncated form (MST1/N). It is less likely that cleavage at Asp-349 is a prerequisite for activation as this site is not conserved in the murine ortholog.

The protein resides in the cytoplasm. Its subcellular location is the nucleus. It catalyses the reaction L-seryl-[protein] + ATP = O-phospho-L-seryl-[protein] + ADP + H(+). It carries out the reaction L-threonyl-[protein] + ATP = O-phospho-L-threonyl-[protein] + ADP + H(+). With respect to regulation, inhibited by the C-terminal non-catalytic region. Activated by caspase-cleavage. Full activation also requires homodimerization and autophosphorylation of Thr-183. Activated by RASSF1 which acts by preventing its dephosphorylation. Functionally, stress-activated, pro-apoptotic kinase which, following caspase-cleavage, enters the nucleus and induces chromatin condensation followed by internucleosomal DNA fragmentation. Key component of the Hippo signaling pathway which plays a pivotal role in organ size control and tumor suppression by restricting proliferation and promoting apoptosis. The core of this pathway is composed of a kinase cascade wherein STK3/MST2 and STK4/MST1, in complex with its regulatory protein SAV1, phosphorylates and activates LATS1/2 in complex with its regulatory protein MOB1, which in turn phosphorylates and inactivates YAP1 oncoprotein and WWTR1/TAZ. Phosphorylation of YAP1 by LATS2 inhibits its translocation into the nucleus to regulate cellular genes important for cell proliferation, cell death, and cell migration. STK3/MST2 and STK4/MST1 are required to repress proliferation of mature hepatocytes, to prevent activation of facultative adult liver stem cells (oval cells), and to inhibit tumor formation. Phosphorylates 'Ser-14' of histone H2B (H2BS14ph) during apoptosis. Phosphorylates FOXO3 upon oxidative stress, which results in its nuclear translocation and cell death initiation. Phosphorylates MOBKL1A, MOBKL1B and RASSF2. Phosphorylates TNNI3 (cardiac Tn-I) and alters its binding affinity to TNNC1 (cardiac Tn-C) and TNNT2 (cardiac Tn-T). Phosphorylates FOXO1 on 'Ser-212' and regulates its activation and stimulates transcription of PMAIP1 in a FOXO1-dependent manner. Phosphorylates SIRT1 and inhibits SIRT1-mediated p53/TP53 deacetylation, thereby promoting p53/TP53 dependent transcription and apoptosis upon DNA damage. Acts as an inhibitor of PKB/AKT1. Phosphorylates AR on 'Ser-650' and suppresses its activity by intersecting with PKB/AKT1 signaling and antagonizing formation of AR-chromatin complexes. The polypeptide is Serine/threonine-protein kinase 4 (STK4) (Colobus guereza (Mantled guereza)).